A 361-amino-acid chain; its full sequence is 3-dehydroquinate synthase (361 aa).

NAD(+)-binding positions include 72–77 (SGEKEK), 130–131 (TT), lysine 142, and lysine 151. Residues glutamate 184, histidine 247, and histidine 264 each coordinate Zn(2+).

Belongs to the sugar phosphate cyclases superfamily. Dehydroquinate synthase family. It depends on Co(2+) as a cofactor. Zn(2+) serves as cofactor. NAD(+) is required as a cofactor.

The protein localises to the cytoplasm. It catalyses the reaction 7-phospho-2-dehydro-3-deoxy-D-arabino-heptonate = 3-dehydroquinate + phosphate. It participates in metabolic intermediate biosynthesis; chorismate biosynthesis; chorismate from D-erythrose 4-phosphate and phosphoenolpyruvate: step 2/7. Its function is as follows. Catalyzes the conversion of 3-deoxy-D-arabino-heptulosonate 7-phosphate (DAHP) to dehydroquinate (DHQ). This is 3-dehydroquinate synthase from Bacillus cereus (strain ATCC 10987 / NRS 248).